Here is a 316-residue protein sequence, read N- to C-terminus: 4-hydroxy-3-methylbut-2-enyl diphosphate reductase (316 aa).

Cysteine 12 provides a ligand contact to [4Fe-4S] cluster. Residues histidine 43 and histidine 81 each coordinate (2E)-4-hydroxy-3-methylbut-2-enyl diphosphate. The dimethylallyl diphosphate site is built by histidine 43 and histidine 81. The isopentenyl diphosphate site is built by histidine 43 and histidine 81. Cysteine 103 is a [4Fe-4S] cluster binding site. Histidine 131 provides a ligand contact to (2E)-4-hydroxy-3-methylbut-2-enyl diphosphate. Residue histidine 131 participates in dimethylallyl diphosphate binding. Histidine 131 contacts isopentenyl diphosphate. The active-site Proton donor is glutamate 133. Threonine 170 serves as a coordination point for (2E)-4-hydroxy-3-methylbut-2-enyl diphosphate. Cysteine 198 is a binding site for [4Fe-4S] cluster. Serine 226, asparagine 228, and serine 271 together coordinate (2E)-4-hydroxy-3-methylbut-2-enyl diphosphate. Dimethylallyl diphosphate contacts are provided by serine 226, asparagine 228, and serine 271. Serine 226, asparagine 228, and serine 271 together coordinate isopentenyl diphosphate.

This sequence belongs to the IspH family. The cofactor is [4Fe-4S] cluster.

It catalyses the reaction isopentenyl diphosphate + 2 oxidized [2Fe-2S]-[ferredoxin] + H2O = (2E)-4-hydroxy-3-methylbut-2-enyl diphosphate + 2 reduced [2Fe-2S]-[ferredoxin] + 2 H(+). The catalysed reaction is dimethylallyl diphosphate + 2 oxidized [2Fe-2S]-[ferredoxin] + H2O = (2E)-4-hydroxy-3-methylbut-2-enyl diphosphate + 2 reduced [2Fe-2S]-[ferredoxin] + 2 H(+). Its pathway is isoprenoid biosynthesis; dimethylallyl diphosphate biosynthesis; dimethylallyl diphosphate from (2E)-4-hydroxy-3-methylbutenyl diphosphate: step 1/1. The protein operates within isoprenoid biosynthesis; isopentenyl diphosphate biosynthesis via DXP pathway; isopentenyl diphosphate from 1-deoxy-D-xylulose 5-phosphate: step 6/6. Functionally, catalyzes the conversion of 1-hydroxy-2-methyl-2-(E)-butenyl 4-diphosphate (HMBPP) into a mixture of isopentenyl diphosphate (IPP) and dimethylallyl diphosphate (DMAPP). Acts in the terminal step of the DOXP/MEP pathway for isoprenoid precursor biosynthesis. The sequence is that of 4-hydroxy-3-methylbut-2-enyl diphosphate reductase from Bacillus thuringiensis (strain Al Hakam).